We begin with the raw amino-acid sequence, 304 residues long: Dermonecrotic toxin LiSicTox-betaIA1i (304 aa).

The signal sequence occupies residues 1–21; sequence MLLPAVISFIVYAVFLQEANG. The propeptide occupies 22–26; that stretch reads HAAER. Residue histidine 38 is part of the active site. Mg(2+) contacts are provided by glutamate 58 and aspartate 60. Residue histidine 74 is the Nucleophile of the active site. Disulfide bonds link cysteine 78/cysteine 84 and cysteine 80/cysteine 223. Mg(2+) is bound at residue aspartate 118.

It belongs to the arthropod phospholipase D family. Class II subfamily. Class IIb sub-subfamily. Mg(2+) serves as cofactor. As to expression, expressed by the venom gland.

It localises to the secreted. It carries out the reaction an N-(acyl)-sphingosylphosphocholine = an N-(acyl)-sphingosyl-1,3-cyclic phosphate + choline. It catalyses the reaction an N-(acyl)-sphingosylphosphoethanolamine = an N-(acyl)-sphingosyl-1,3-cyclic phosphate + ethanolamine. The enzyme catalyses a 1-acyl-sn-glycero-3-phosphocholine = a 1-acyl-sn-glycero-2,3-cyclic phosphate + choline. The catalysed reaction is a 1-acyl-sn-glycero-3-phosphoethanolamine = a 1-acyl-sn-glycero-2,3-cyclic phosphate + ethanolamine. Its function is as follows. Dermonecrotic toxins cleave the phosphodiester linkage between the phosphate and headgroup of certain phospholipids (sphingolipid and lysolipid substrates), forming an alcohol (often choline) and a cyclic phosphate. This toxin acts on sphingomyelin (SM) with low activity. It may also act on ceramide phosphoethanolamine (CPE), lysophosphatidylcholine (LPC) and lysophosphatidylethanolamine (LPE), but not on lysophosphatidylserine (LPS), and lysophosphatidylglycerol (LPG). It acts by transphosphatidylation, releasing exclusively cyclic phosphate products as second products. Induces inflammatory response but no or very weak hemolysis, dermonecrosis, vascular permeability, edema, and cytotoxicity against renal epithelial cells. Causes swelling and erythema. In vivo, is not lethal to mice when intraperitoneally injected. In Loxosceles intermedia (Brown spider), this protein is Dermonecrotic toxin LiSicTox-betaIA1i.